An 82-amino-acid chain; its full sequence is Antitoxin MazE8 (82 aa).

Forms a complex with cognate toxin MazF8.

In terms of biological role, antitoxin component of a type II toxin-antitoxin (TA) system. Its cognate toxin is MazF8. This Mycobacterium tuberculosis (strain ATCC 25618 / H37Rv) protein is Antitoxin MazE8 (mazE8).